The primary structure comprises 517 residues: ATP synthase subunit alpha (517 aa).

174 to 181 provides a ligand contact to ATP; it reads GDRQTGKT.

It belongs to the ATPase alpha/beta chains family. F-type ATPases have 2 components, CF(1) - the catalytic core - and CF(0) - the membrane proton channel. CF(1) has five subunits: alpha(3), beta(3), gamma(1), delta(1), epsilon(1). CF(0) has three main subunits: a(1), b(2) and c(9-12). The alpha and beta chains form an alternating ring which encloses part of the gamma chain. CF(1) is attached to CF(0) by a central stalk formed by the gamma and epsilon chains, while a peripheral stalk is formed by the delta and b chains.

The protein resides in the cell inner membrane. It carries out the reaction ATP + H2O + 4 H(+)(in) = ADP + phosphate + 5 H(+)(out). In terms of biological role, produces ATP from ADP in the presence of a proton gradient across the membrane. The alpha chain is a regulatory subunit. The protein is ATP synthase subunit alpha of Variovorax paradoxus (strain S110).